The chain runs to 487 residues: Glutamyl-tRNA(Gln) amidotransferase subunit A (487 aa).

Residues lysine 75 and serine 150 each act as charge relay system in the active site. The active-site Acyl-ester intermediate is serine 174.

It belongs to the amidase family. GatA subfamily. In terms of assembly, heterotrimer of A, B and C subunits.

The enzyme catalyses L-glutamyl-tRNA(Gln) + L-glutamine + ATP + H2O = L-glutaminyl-tRNA(Gln) + L-glutamate + ADP + phosphate + H(+). Its function is as follows. Allows the formation of correctly charged Gln-tRNA(Gln) through the transamidation of misacylated Glu-tRNA(Gln) in organisms which lack glutaminyl-tRNA synthetase. The reaction takes place in the presence of glutamine and ATP through an activated gamma-phospho-Glu-tRNA(Gln). In Syntrophomonas wolfei subsp. wolfei (strain DSM 2245B / Goettingen), this protein is Glutamyl-tRNA(Gln) amidotransferase subunit A.